The following is a 443-amino-acid chain: Thymidine phosphorylase (443 aa).

The protein belongs to the thymidine/pyrimidine-nucleoside phosphorylase family. As to quaternary structure, homodimer.

The enzyme catalyses thymidine + phosphate = 2-deoxy-alpha-D-ribose 1-phosphate + thymine. It participates in pyrimidine metabolism; dTMP biosynthesis via salvage pathway; dTMP from thymine: step 1/2. Functionally, the enzymes which catalyze the reversible phosphorolysis of pyrimidine nucleosides are involved in the degradation of these compounds and in their utilization as carbon and energy sources, or in the rescue of pyrimidine bases for nucleotide synthesis. The protein is Thymidine phosphorylase of Shewanella woodyi (strain ATCC 51908 / MS32).